A 299-amino-acid chain; its full sequence is Pseudouridine-5'-phosphate glycosidase (299 aa).

Glu-23 (proton donor) is an active-site residue. Substrate contacts are provided by Lys-84 and Val-104. Mn(2+) is bound at residue Asp-136. 138–140 (SAD) is a binding site for substrate. Residue Lys-157 is the Nucleophile of the active site.

Belongs to the pseudouridine-5'-phosphate glycosidase family. In terms of assembly, homotrimer. Mn(2+) serves as cofactor.

The enzyme catalyses D-ribose 5-phosphate + uracil = psi-UMP + H2O. Catalyzes the reversible cleavage of pseudouridine 5'-phosphate (PsiMP) to ribose 5-phosphate and uracil. Functions biologically in the cleavage direction, as part of a pseudouridine degradation pathway. The chain is Pseudouridine-5'-phosphate glycosidase from Solibacter usitatus (strain Ellin6076).